We begin with the raw amino-acid sequence, 297 residues long: MKKAIFGAMTALITPFKNGKLDEAGYEKLIKRQIKNGIDAIVPVGTTGESATLTHDEHRICIEIAVETCKNTKVKVLAGAGSNATHEAVDLAEFAEAHGADGILSVAPYYNKPTQEGLYLHYKNIANSVKIPVLLYNVPGRTGCDILPETVIRLFNDCENIYGVKEASGSIDRCVDLLAHEPKLYVLSGEDAINYPILSNGGKGVISVTSNLLPDQTAALTHYALDNEFLKAKEINDRLYNINKIMFCESNPIPIKAAMFIAGLIDTLEYRLPLCNPSVDNLKKIEETMKSYDIKGF.

Thr47 is a binding site for pyruvate. Tyr136 functions as the Proton donor/acceptor in the catalytic mechanism. The active-site Schiff-base intermediate with substrate is Lys165. Ile206 contributes to the pyruvate binding site.

This sequence belongs to the DapA family. As to quaternary structure, homotetramer; dimer of dimers.

The protein localises to the cytoplasm. The enzyme catalyses L-aspartate 4-semialdehyde + pyruvate = (2S,4S)-4-hydroxy-2,3,4,5-tetrahydrodipicolinate + H2O + H(+). It functions in the pathway amino-acid biosynthesis; L-lysine biosynthesis via DAP pathway; (S)-tetrahydrodipicolinate from L-aspartate: step 3/4. In terms of biological role, catalyzes the condensation of (S)-aspartate-beta-semialdehyde [(S)-ASA] and pyruvate to 4-hydroxy-tetrahydrodipicolinate (HTPA). The protein is 4-hydroxy-tetrahydrodipicolinate synthase of Campylobacter fetus subsp. fetus (strain 82-40).